The primary structure comprises 131 residues: MRHRVKRHKLGRYGSHRKSLLRNLSREIVEHGSIVTTTAKAKALKTFMDKLVSKAIEAATTDDRARSVHLRRQINAVLGDRRLTNKLVDEIAKNYVGRRGGYVRVLRIGFRRGDAAEMSLVQLVEASSQEG.

The protein belongs to the bacterial ribosomal protein bL17 family. As to quaternary structure, part of the 50S ribosomal subunit. Contacts protein L32.

This is Large ribosomal subunit protein bL17 from Thermotoga maritima (strain ATCC 43589 / DSM 3109 / JCM 10099 / NBRC 100826 / MSB8).